Reading from the N-terminus, the 108-residue chain is Ig kappa chain V-V region EPC 109 (108 aa).

The segment at 1 to 23 (DVQMIQSPSSLSASLGDIVTMTC) is framework-1. A disulfide bridge links Cys23 with Cys88. The complementarity-determining-1 stretch occupies residues 24-34 (QASQGTNINLN). The framework-2 stretch occupies residues 35–49 (WFQQKPGKAPKLLIY). A complementarity-determining-2 region spans residues 50-56 (GASILEA). The segment at 57 to 88 (GVPSRFSGRRYGTDFTLTISSLEDEDMATYFC) is framework-3. The segment at 89-97 (LQHSYLPYT) is complementarity-determining-3. The interval 98-108 (FGGGTKLEKKR) is framework-4.

The protein is Ig kappa chain V-V region EPC 109 of Mus musculus (Mouse).